The sequence spans 140 residues: Nucleoside diphosphate kinase (140 aa).

Positions 10, 58, 86, 92, 103, and 113 each coordinate ATP. Residue His-116 is the Pros-phosphohistidine intermediate of the active site.

This sequence belongs to the NDK family. Homohexamer. Requires Mg(2+) as cofactor.

The protein localises to the cytoplasm. The enzyme catalyses a 2'-deoxyribonucleoside 5'-diphosphate + ATP = a 2'-deoxyribonucleoside 5'-triphosphate + ADP. The catalysed reaction is a ribonucleoside 5'-diphosphate + ATP = a ribonucleoside 5'-triphosphate + ADP. Its function is as follows. Major role in the synthesis of nucleoside triphosphates other than ATP. The ATP gamma phosphate is transferred to the NDP beta phosphate via a ping-pong mechanism, using a phosphorylated active-site intermediate. The sequence is that of Nucleoside diphosphate kinase from Methanocaldococcus jannaschii (strain ATCC 43067 / DSM 2661 / JAL-1 / JCM 10045 / NBRC 100440) (Methanococcus jannaschii).